We begin with the raw amino-acid sequence, 373 residues long: 1-deoxy-D-xylulose 5-phosphate reductoisomerase (373 aa).

6 residues coordinate NADPH: Thr-10, Gly-11, Ser-12, Ile-13, Arg-37, and Asn-112. 1-deoxy-D-xylulose 5-phosphate is bound at residue Lys-113. NADPH is bound at residue Glu-114. Asp-134 provides a ligand contact to Mn(2+). Residues Ser-135, Glu-136, Ser-160, and His-183 each coordinate 1-deoxy-D-xylulose 5-phosphate. Glu-136 is a binding site for Mn(2+). Gly-189 is an NADPH binding site. Ser-196, Asn-201, Lys-202, and Glu-205 together coordinate 1-deoxy-D-xylulose 5-phosphate. Residue Glu-205 participates in Mn(2+) binding.

It belongs to the DXR family. Requires Mg(2+) as cofactor. Mn(2+) serves as cofactor.

It carries out the reaction 2-C-methyl-D-erythritol 4-phosphate + NADP(+) = 1-deoxy-D-xylulose 5-phosphate + NADPH + H(+). It functions in the pathway isoprenoid biosynthesis; isopentenyl diphosphate biosynthesis via DXP pathway; isopentenyl diphosphate from 1-deoxy-D-xylulose 5-phosphate: step 1/6. Functionally, catalyzes the NADPH-dependent rearrangement and reduction of 1-deoxy-D-xylulose-5-phosphate (DXP) to 2-C-methyl-D-erythritol 4-phosphate (MEP). The protein is 1-deoxy-D-xylulose 5-phosphate reductoisomerase of Persephonella marina (strain DSM 14350 / EX-H1).